The following is a 186-amino-acid chain: Photosystem I assembly protein Ycf4 (186 aa).

Helical transmembrane passes span 22-42 (FCWA…GTSS) and 57-77 (IIFF…LFIS).

Belongs to the Ycf4 family.

It is found in the plastid. Its subcellular location is the chloroplast thylakoid membrane. Its function is as follows. Seems to be required for the assembly of the photosystem I complex. This is Photosystem I assembly protein Ycf4 from Dioscorea elephantipes (Elephant's foot yam).